Consider the following 537-residue polypeptide: Lariat debranching enzyme (537 aa).

A divalent metal cation-binding residues include C8, H10, D39, and N84. Positions 124 to 154 are lariat recognition loop; it reads SGIYKGHDFLRGHHEFPPYTESTCRSVYHVR. A divalent metal cation contacts are provided by H174, H226, and H228. 2 disordered regions span residues 242–272 and 473–537; these read KAPT…SRLP and TAAE…EDDD. Over residues 251–260 the composition is skewed to low complexity; it reads SSSSSSSSSS.

The protein belongs to the lariat debranching enzyme family. It depends on Fe(2+) as a cofactor. The cofactor is Zn(2+). Requires Mn(2+) as cofactor.

The protein localises to the nucleus. With respect to regulation, active in presence of diverse metals including Fe(2+), Zn(2+), Mn(2+). Binds two metal cations in two adjacent alpha and beta metal-binding pockets. Its function is as follows. Cleaves the 2'-5' phosphodiester linkage at the branch point of lariat intron pre-mRNAs after splicing and converts them into linear molecules that are subsequently degraded. It thereby facilitates ribonucleotide turnover. The chain is Lariat debranching enzyme (DBR1) from Drosophila pseudoobscura pseudoobscura (Fruit fly).